Here is a 464-residue protein sequence, read N- to C-terminus: UDP-N-acetylmuramoylalanine--D-glutamate ligase (464 aa).

Gly-112–Thr-118 lines the ATP pocket.

Belongs to the MurCDEF family.

It is found in the cytoplasm. The catalysed reaction is UDP-N-acetyl-alpha-D-muramoyl-L-alanine + D-glutamate + ATP = UDP-N-acetyl-alpha-D-muramoyl-L-alanyl-D-glutamate + ADP + phosphate + H(+). It participates in cell wall biogenesis; peptidoglycan biosynthesis. Functionally, cell wall formation. Catalyzes the addition of glutamate to the nucleotide precursor UDP-N-acetylmuramoyl-L-alanine (UMA). The protein is UDP-N-acetylmuramoylalanine--D-glutamate ligase of Chlorobium phaeobacteroides (strain DSM 266 / SMG 266 / 2430).